The chain runs to 668 residues: Acetoin catabolism regulatory protein (668 aa).

Residues 341 to 570 (LTGGDAALQL…NVLEYARAVC (230 aa)) enclose the Sigma-54 factor interaction domain. Residues 369-376 (GETGSGKE) and 433-442 (ADGGTLFLDE) each bind ATP. Residues 586 to 606 (GPAPSAALPQPGPAQSPAAAP) are compositionally biased toward low complexity. The segment at 586–611 (GPAPSAALPQPGPAQSPAAAPFDPHQ) is disordered. The segment at residues 630-649 (LSAVARQIGVSRMTLYRRME) is a DNA-binding region (H-T-H motif).

In terms of biological role, required for sigma-54-dependent transcription of acoXABC. The polypeptide is Acetoin catabolism regulatory protein (acoR) (Cupriavidus necator (strain ATCC 17699 / DSM 428 / KCTC 22496 / NCIMB 10442 / H16 / Stanier 337) (Ralstonia eutropha)).